A 241-amino-acid chain; its full sequence is Enolase-phosphatase E1 (241 aa).

Residues Asp9 and Glu11 each contribute to the Mg(2+) site. Residues 133–134 and Lys172 each bind substrate; that span reads SS. Mg(2+) is bound at residue Asp198.

The protein belongs to the HAD-like hydrolase superfamily. MasA/MtnC family. In terms of assembly, monomer. The cofactor is Mg(2+).

It is found in the cytoplasm. It localises to the nucleus. It catalyses the reaction 5-methylsulfanyl-2,3-dioxopentyl phosphate + H2O = 1,2-dihydroxy-5-(methylsulfanyl)pent-1-en-3-one + phosphate. Its pathway is amino-acid biosynthesis; L-methionine biosynthesis via salvage pathway; L-methionine from S-methyl-5-thio-alpha-D-ribose 1-phosphate: step 3/6. It functions in the pathway amino-acid biosynthesis; L-methionine biosynthesis via salvage pathway; L-methionine from S-methyl-5-thio-alpha-D-ribose 1-phosphate: step 4/6. Bifunctional enzyme that catalyzes the enolization of 2,3-diketo-5-methylthiopentyl-1-phosphate (DK-MTP-1-P) into the intermediate 2-hydroxy-3-keto-5-methylthiopentenyl-1-phosphate (HK-MTPenyl-1-P), which is then dephosphorylated to form the acireductone 1,2-dihydroxy-3-keto-5-methylthiopentene (DHK-MTPene). In Scheffersomyces stipitis (strain ATCC 58785 / CBS 6054 / NBRC 10063 / NRRL Y-11545) (Yeast), this protein is Enolase-phosphatase E1.